We begin with the raw amino-acid sequence, 2150 residues long: Zinc finger protein sdc-3 (2150 aa).

Positions 443–987 are dosage compensation domain 1; that stretch reads QEITSPMFAL…DQVENEEPER (545 aa). Disordered regions lie at residues 874 to 894, 1261 to 1373, 1411 to 1448, and 1491 to 1670; these read EKEW…EEED, GSVV…GPEV, FETS…GPIN, and EVLQ…SEKL. Residues 1267 to 1293 are compositionally biased toward polar residues; that stretch reads TNQQEENVTSEGPTLQEGSSIPSSSHI. The span at 1321 to 1333 shows a compositional bias: basic residues; that stretch reads KKSGKTTRGRPKK. The segment covering 1347-1357 has biased composition (basic and acidic residues); sequence GQKEEAAHEPE. Residues 1504–1524 show a composition bias toward basic residues; that stretch reads SSKKRGRRRKKTPPHIAKARK. A sex determination domain region spans residues 1508 to 1516; sequence RGRRRKKTP. Over residues 1585-1598 the composition is skewed to basic and acidic residues; it reads EDLHETERPGHVGE. Residues 1638–1648 are compositionally biased toward polar residues; the sequence is IQSQAGTNASP. 2 consecutive C2H2-type zinc fingers follow at residues 2078-2105 and 2117-2141; these read HKCV…GKLH and DDCQ…NHHH. The interval 2080 to 2105 is dosage compensation domain 2; that stretch reads CVQCSIRNQSVYFSSYSLLELHGKLH.

In terms of assembly, component of the SDC complex, which consists of sdc-1, sdc-2 and sdc-3. Within the complex, interacts with sdc-1 and sdc-2. Interacts with dpy-21. In terms of processing, sumoylated. Sumoylation is important for assembly of the dosage compensation complex and its robust binding to the X chromosome. Expressed in somatic and in germline tissues in hermaphrodites (XX). In males (XO), only present in embryos younger than the 100-cell stage (at protein level).

The protein localises to the chromosome. It localises to the nucleus. Component of the SDC complex that functions in sex determination and in X chromosome dosage compensation specifically in hermaphrodite (XX) animals. Plays a central role in the recruitment of the condensin I-like dosage compensation complex to the male sex-determining autosomal gene her-1, thereby contributing to its repression and initiating hermaphrodite sexual development. Involved in the recruitment and assembly of the dosage compensation complex and the dosage compensation protein dpy-21 onto the X chromosomes in hermaphrodites, which leads to a reduction of X-linked gene transcription and an equalization of X-linked gene expression between the sexes. This Caenorhabditis elegans protein is Zinc finger protein sdc-3 (sdc-3).